Here is a 662-residue protein sequence, read N- to C-terminus: Envelope glycoprotein (662 aa).

The first 34 residues, 1 to 34, serve as a signal peptide directing secretion; it reads MEGPTHPKPSKDKTFSWDLMILVGVLLRLDVGMA. Residues 35 to 606 lie on the Extracellular side of the membrane; sequence NPSPHQIYNV…FNKSPWFTTL (572 aa). N-linked (GlcNAc...) asparagine; by host glycosylation is found at Asn43 and Asn58. Cystine bridges form between Cys115-Cys132 and Cys124-Cys137. The segment at 251 to 281 is disordered; that stretch reads VLPDQKPPSRQSQIESRVTPHHSQGNGGTPG. A compositionally biased stretch (polar residues) spans 258–274; it reads PSRQSQIESRVTPHHSQ. N-linked (GlcNAc...) asparagine; by host glycans are attached at residues Asn286, Asn322, and Asn327. 3 cysteine pairs are disulfide-bonded: Cys332-Cys335, Cys332-Cys559, and Cys551-Cys558. Positions 332–335 match the CXXC motif; sequence CWLC. N-linked (GlcNAc...) asparagine; by host glycosylation is found at Asn351, Asn354, and Asn430. The tract at residues 468 to 488 is fusion peptide; that stretch reads ISLTVALMLGGLTVGGIAAGV. Coiled-coil stretches lie at residues 496–545 and 555–591; these read LETA…ILFL and KEEC…SQQG. The tract at residues 534–550 is immunosuppression; that stretch reads LQNRRGLDILFLQEGGL. Residues 551-559 carry the CX6CC motif; sequence CAALKEECC. A helical membrane pass occupies residues 607–627; it reads ISSIMGPLLILLLILLFGPCI. A lipid anchor (S-palmitoyl cysteine; by host) is attached at Cys626. The Cytoplasmic portion of the chain corresponds to 628 to 662; that stretch reads LNRLVQFVKDRISVVQALILTQQYQQIKQYDPDQP.

As to quaternary structure, the mature envelope protein (Env) consists of a trimer of SU-TM heterodimers attached by a labile interchain disulfide bond. Post-translationally, specific enzymatic cleavages in vivo yield mature proteins. Envelope glycoproteins are synthesized as an inactive precursor that is N-glycosylated and processed likely by host cell furin or by a furin-like protease in the Golgi to yield the mature SU and TM proteins. The cleavage site between SU and TM requires the minimal sequence [KR]-X-[KR]-R. The R-peptide is released from the C-terminus of the cytoplasmic tail of the TM protein upon particle formation as a result of proteolytic cleavage by the viral protease. Cleavage of this peptide is required for TM to become fusogenic. In terms of processing, the CXXC motif is highly conserved across a broad range of retroviral envelope proteins. It is thought to participate in the formation of a labile disulfide bond possibly with the CX6CC motif present in the transmembrane protein. Isomerization of the intersubunit disulfide bond to an SU intrachain disulfide bond is thought to occur upon receptor recognition in order to allow membrane fusion. The transmembrane protein is palmitoylated. Post-translationally, the R-peptide is palmitoylated.

It is found in the virion membrane. Its subcellular location is the host cell membrane. Its function is as follows. The surface protein (SU) attaches the virus to the host cell by binding to its receptor. This interaction triggers the refolding of the transmembrane protein (TM) and is thought to activate its fusogenic potential by unmasking its fusion peptide. Fusion occurs at the host cell plasma membrane. In terms of biological role, the transmembrane protein (TM) acts as a class I viral fusion protein. Under the current model, the protein has at least 3 conformational states: pre-fusion native state, pre-hairpin intermediate state, and post-fusion hairpin state. During viral and target cell membrane fusion, the coiled coil regions (heptad repeats) assume a trimer-of-hairpins structure, positioning the fusion peptide in close proximity to the C-terminal region of the ectodomain. The formation of this structure appears to drive apposition and subsequent fusion of viral and target cell membranes. Membranes fusion leads to delivery of the nucleocapsid into the cytoplasm. The protein is Envelope glycoprotein (env) of Felis catus (Cat).